Here is a 347-residue protein sequence, read N- to C-terminus: N-acetyl-gamma-glutamyl-phosphate reductase (347 aa).

The active site involves Cys152.

It belongs to the NAGSA dehydrogenase family. Type 1 subfamily.

The protein localises to the cytoplasm. The enzyme catalyses N-acetyl-L-glutamate 5-semialdehyde + phosphate + NADP(+) = N-acetyl-L-glutamyl 5-phosphate + NADPH + H(+). It functions in the pathway amino-acid biosynthesis; L-arginine biosynthesis; N(2)-acetyl-L-ornithine from L-glutamate: step 3/4. In terms of biological role, catalyzes the NADPH-dependent reduction of N-acetyl-5-glutamyl phosphate to yield N-acetyl-L-glutamate 5-semialdehyde. The polypeptide is N-acetyl-gamma-glutamyl-phosphate reductase (Neisseria gonorrhoeae (strain NCCP11945)).